Consider the following 150-residue polypeptide: MTRKQKRLAIIGGGVGFLTAAVLLVMFAFSQAVAYFYVPGDLTKADVAPGTRIRLGGLVEAGSVKRGEGRTITFKVTDTLATVPVTYTGILPDLFREGQGVVAEGAFVGGSPVFVADTVLAKHDETYMPKDVADRLKAQGVTLGGEENIR.

Residues 1–7 (MTRKQKR) lie on the Cytoplasmic side of the membrane. A helical; Signal-anchor for type II membrane protein transmembrane segment spans residues 8 to 28 (LAIIGGGVGFLTAAVLLVMFA). Over 29–150 (FSQAVAYFYV…VTLGGEENIR (122 aa)) the chain is Periplasmic. Residues His-123 and Tyr-127 each coordinate heme.

The protein belongs to the CcmE/CycJ family.

The protein resides in the cell inner membrane. Functionally, heme chaperone required for the biogenesis of c-type cytochromes. Transiently binds heme delivered by CcmC and transfers the heme to apo-cytochromes in a process facilitated by CcmF and CcmH. The chain is Cytochrome c-type biogenesis protein CcmE from Sinorhizobium medicae (strain WSM419) (Ensifer medicae).